A 133-amino-acid polypeptide reads, in one-letter code: uncharacterized protein (133 aa).

This is an uncharacterized protein from Enterobacteria phage T4 (Bacteriophage T4).